Here is a 268-residue protein sequence, read N- to C-terminus: MTLLNVSGLSHHYAHGGFNGKHQHQAVLNNVSLTLKSGETVALLGRSGCGKSTLARLLVGLESPAQGNISWRGEPLAKLNRAQRKAFRRDIQMVFQDSISAVNPRKTVREILREPMRHLLSLKKSEQLARASEMLKAVDLDDSVLDKRPPQLSGGQLQRVCLARALAVEPKLLILDEAVSNLDLVLQAGVIRLLKKLQQQFGTACLFITHDLRLVERFCQRVMVMDNGQIVETQVVGDKLTFSSDAGRVLQNAVLPAFPVRRRTTEKV.

Residues 4–252 enclose the ABC transporter domain; sequence LNVSGLSHHY…SSDAGRVLQN (249 aa). 45 to 52 contributes to the ATP binding site; sequence GRSGCGKS.

The protein belongs to the ABC transporter superfamily. Nickel importer (TC 3.A.1.5.3) family. As to quaternary structure, the complex is composed of two ATP-binding proteins (NikD and NikE), two transmembrane proteins (NikB and NikC) and a solute-binding protein (NikA).

The protein resides in the cell inner membrane. It catalyses the reaction Ni(2+)(out) + ATP + H2O = Ni(2+)(in) + ADP + phosphate + H(+). In terms of biological role, part of the ABC transporter complex NikABCDE involved in nickel import. Responsible for energy coupling to the transport system. The sequence is that of Nickel import ATP-binding protein NikE from Shigella sonnei (strain Ss046).